The sequence spans 273 residues: NH(3)-dependent NAD(+) synthetase (273 aa).

Residue 47–54 (GISGGQDS) participates in ATP binding. Asp53 contributes to the Mg(2+) binding site. Arg139 is a binding site for deamido-NAD(+). An ATP-binding site is contributed by Thr159. Glu164 contacts Mg(2+). Deamido-NAD(+) is bound by residues Lys172 and Asp179. ATP-binding residues include Lys188 and Thr210. 259–260 (HK) is a binding site for deamido-NAD(+).

This sequence belongs to the NAD synthetase family. Homodimer.

The catalysed reaction is deamido-NAD(+) + NH4(+) + ATP = AMP + diphosphate + NAD(+) + H(+). Its pathway is cofactor biosynthesis; NAD(+) biosynthesis; NAD(+) from deamido-NAD(+) (ammonia route): step 1/1. Catalyzes the ATP-dependent amidation of deamido-NAD to form NAD. Uses ammonia as a nitrogen source. The chain is NH(3)-dependent NAD(+) synthetase from Staphylococcus aureus (strain N315).